Reading from the N-terminus, the 539-residue chain is E3 ubiquitin-protein ligase arc-1 (539 aa).

Residues 6-53 form an RING-type zinc finger; the sequence is CNVCNEEYSARDPLKCPRVLTGCGHTICHNCAISIAGRNSSIFCPFDR. Residues 103-149 form a B box-type zinc finger; sequence LLNLECDEDSEHVAVIYCTVCDSNLCERCSESTHSTNVLSKHRRIPL. The interval 369–539 is ARF-like; the sequence is ESRVVLLGLD…LSRLNGTCPV (171 aa). GTP contacts are provided by residues 376–383, 422–426, and 481–484; these read GLDGAGKT, DVGGL, and NRKD.

The protein in the C-terminal section; belongs to the small GTPase superfamily. Arf family.

The catalysed reaction is S-ubiquitinyl-[E2 ubiquitin-conjugating enzyme]-L-cysteine + [acceptor protein]-L-lysine = [E2 ubiquitin-conjugating enzyme]-L-cysteine + N(6)-ubiquitinyl-[acceptor protein]-L-lysine.. The protein operates within protein modification; protein ubiquitination. Acts as an E3 ubiquitin-protein ligase. In Caenorhabditis elegans, this protein is E3 ubiquitin-protein ligase arc-1 (arc-1).